Here is an 837-residue protein sequence, read N- to C-terminus: Outer membrane usher protein PsaC (837 aa).

The signal sequence occupies residues 1-23 (MKKLIVQFTTITLLMSTSFLVGA).

Belongs to the fimbrial export usher family.

The protein resides in the cell outer membrane. Its function is as follows. Involved in the export and assembly of PsaA (pH 6) fimbrial subunits across the outer membrane. The sequence is that of Outer membrane usher protein PsaC (psaC) from Yersinia pestis.